The primary structure comprises 385 residues: S-type anion channel SLAH1 (385 aa).

Residues M1–H42 are Cytoplasmic-facing. A helical transmembrane segment spans residues A43–P65. Residues E66–A81 lie on the Extracellular side of the membrane. A helical membrane pass occupies residues F82–L102. Topologically, residues K103–E114 are cytoplasmic. The helical transmembrane segment at F115–L135 threads the bilayer. The Extracellular segment spans residues Q136–T150. A helical transmembrane segment spans residues L151–F171. Residues T172–R176 lie on the Cytoplasmic side of the membrane. The helical transmembrane segment at F177–A197 threads the bilayer. The Extracellular portion of the chain corresponds to R198–E207. The helical transmembrane segment at C208–Y228 threads the bilayer. Residues Q229–P243 are Cytoplasmic-facing. The helical transmembrane segment at I244–G264 threads the bilayer. Residue T265 is a topological domain, extracellular. A helical membrane pass occupies residues F266 to C286. The Cytoplasmic segment spans residues R287–N299. The chain crosses the membrane as a helical span at residues V300–A320. Residues Q321 to G330 are Extracellular-facing. The helical transmembrane segment at L331 to A351 threads the bilayer. Over A352–N385 the chain is Cytoplasmic. Residues S366–N385 are disordered. The segment covering T376 to N385 has biased composition (polar residues).

Belongs to the SLAC1 S-type anion channel family. As to quaternary structure, homotrimer. As to expression, expressed in the vascular systems of root.

Its subcellular location is the cell membrane. In terms of biological role, slow, weak voltage-dependent S-type anion efflux channel involved in maintenance of anion homeostasis. In Arabidopsis thaliana (Mouse-ear cress), this protein is S-type anion channel SLAH1 (SLAH1).